Consider the following 290-residue polypeptide: Plasma membrane ascorbate-dependent reductase CYBRD1 (290 aa).

Topologically, residues 1-7 are cytoplasmic; sequence MAMEGYR. Residues 8 to 32 traverse the membrane as a helical segment; the sequence is GFLGLLVSALLVGFLSVIFVLIWVL. The region spanning 15–220 is the Cytochrome b561 domain; that stretch reads SALLVGFLSV…FGALIFWIVT (206 aa). Residues 33–47 are Extracellular-facing; that stretch reads HFREGLGWNGSGLEF. The chain crosses the membrane as a helical span at residues 48 to 69; that stretch reads NWHPVLAVTGFVFIQGIAIIVY. Residues H50, R70, and K79 each contribute to the heme b site. Over 70-78 the chain is Cytoplasmic; the sequence is RLPWTWKCS. Positions 79 and 83 each coordinate L-ascorbate. A helical membrane pass occupies residues 79–105; sequence KLLMKSIHAGLNAVAAILAIISVVAVF. H86 serves as a coordination point for heme b. Residues 106–118 are Extracellular-facing; it reads EYHNVQKVPHMYS. H108 is a Fe(3+) binding site. Heme b contacts are provided by residues 115 to 118 and H120; that span reads HMYS. The chain crosses the membrane as a helical span at residues 119 to 144; sequence LHSWVGLTALILYIQQLVVGFFVFLL. Topologically, residues 145–151 are cytoplasmic; the sequence is PWAPPSL. L-ascorbate is bound at residue R152. Residues 152 to 179 form a helical membrane-spanning segment; that stretch reads RAIVMPIHVYSGLLLFGTVIATVLMGVT. 2 residues coordinate heme b: H159 and E180. The Extracellular segment spans residues 180–197; the sequence is EKLFFVLKHPSYHSFPPE. A helical transmembrane segment spans residues 198-222; sequence GVFTNTLGLLILVFGALIFWIVTRP. Topologically, residues 223–290 are cytoplasmic; the sequence is QWKRPREPGS…LADSGQRSTM (68 aa). K225 is a heme b binding site. Phosphoserine is present on S232. The disordered stretch occupies residues 257–290; the sequence is SMDAADPADAESSSEGAARKRTLGLADSGQRSTM. A compositionally biased stretch (low complexity) spans 260–272; sequence AADPADAESSSEG. Phosphothreonine is present on T289.

In terms of assembly, homodimer. It depends on heme b as a cofactor. In terms of tissue distribution, highly expressed in the brush-border membrane of duodenal enterocytes (at protein level). Also expressed in liver and spleen.

The protein localises to the cell membrane. It localises to the apical cell membrane. The enzyme catalyses Fe(3+)(out) + L-ascorbate(in) = monodehydro-L-ascorbate radical(in) + Fe(2+)(out) + H(+). The catalysed reaction is Cu(2+)(out) + L-ascorbate(in) = Cu(+)(out) + monodehydro-L-ascorbate radical(in) + H(+). It carries out the reaction monodehydro-L-ascorbate radical(out) + L-ascorbate(in) = monodehydro-L-ascorbate radical(in) + L-ascorbate(out). Its function is as follows. Plasma membrane reductase that uses cytoplasmic ascorbate as an electron donor to reduce extracellular Fe(3+) into Fe(2+). Probably functions in dietary iron absorption at the brush border of duodenal enterocytes by producing Fe(2+), the divalent form of iron that can be transported into enterocytes. It is also able to reduce extracellular monodehydro-L-ascorbate and may be involved in extracellular ascorbate regeneration by erythrocytes in blood. May also act as a ferrireductase in airway epithelial cells. May also function as a cupric transmembrane reductase. In Mus musculus (Mouse), this protein is Plasma membrane ascorbate-dependent reductase CYBRD1.